The primary structure comprises 287 residues: Protease HtpX (287 aa).

2 consecutive transmembrane segments (helical) span residues 4 to 24 (IFLL…VMSI) and 33 to 53 (GGLL…SLAI). Residue His139 participates in Zn(2+) binding. Glu140 is a catalytic residue. His143 is a binding site for Zn(2+). Transmembrane regions (helical) follow at residues 154-174 (LIQG…AGII) and 195-215 (AVVF…VAYF). Glu220 serves as a coordination point for Zn(2+).

Belongs to the peptidase M48B family. Requires Zn(2+) as cofactor.

It is found in the cell inner membrane. The sequence is that of Protease HtpX from Shewanella halifaxensis (strain HAW-EB4).